We begin with the raw amino-acid sequence, 26 residues long: M-poneritoxin-Ng1d (26 aa).

In terms of tissue distribution, expressed by the venom gland.

The protein localises to the secreted. Its subcellular location is the target cell membrane. Its function is as follows. Has a broad spectrum of activity against both Gram-positive and Gram-negative bacteria and S.cerevisiae. Has insecticidal and hemolytic activities. May act by disrupting the integrity of the bacterial cell membrane. This chain is M-poneritoxin-Ng1d, found in Neoponera goeldii (Ponerine ant).